The following is a 290-amino-acid chain: ATP synthase gamma chain (290 aa).

This sequence belongs to the ATPase gamma chain family. As to quaternary structure, F-type ATPases have 2 components, CF(1) - the catalytic core - and CF(0) - the membrane proton channel. CF(1) has five subunits: alpha(3), beta(3), gamma(1), delta(1), epsilon(1). CF(0) has three main subunits: a, b and c.

The protein resides in the cell membrane. Produces ATP from ADP in the presence of a proton gradient across the membrane. The gamma chain is believed to be important in regulating ATPase activity and the flow of protons through the CF(0) complex. In Akkermansia muciniphila (strain ATCC BAA-835 / DSM 22959 / JCM 33894 / BCRC 81048 / CCUG 64013 / CIP 107961 / Muc), this protein is ATP synthase gamma chain.